Consider the following 642-residue polypeptide: Threonine--tRNA ligase (642 aa).

The TGS domain occupies 1–61 (MPVITLPDGS…ESDAQLAIIT (61 aa)). Residues 243-534 (DHRKIGKQLD…LTEEYAGFYP (292 aa)) form a catalytic region. Zn(2+) is bound by residues Cys334, His385, and His511.

This sequence belongs to the class-II aminoacyl-tRNA synthetase family. Homodimer. The cofactor is Zn(2+).

The protein resides in the cytoplasm. The enzyme catalyses tRNA(Thr) + L-threonine + ATP = L-threonyl-tRNA(Thr) + AMP + diphosphate + H(+). Catalyzes the attachment of threonine to tRNA(Thr) in a two-step reaction: L-threonine is first activated by ATP to form Thr-AMP and then transferred to the acceptor end of tRNA(Thr). Also edits incorrectly charged L-seryl-tRNA(Thr). This Serratia proteamaculans (strain 568) protein is Threonine--tRNA ligase.